Reading from the N-terminus, the 778-residue chain is Endonuclease MutS2 (778 aa).

332–339 (GPNTGGKT) is a binding site for ATP. A Smr domain is found at 703–778 (IDLRGKMVDE…GLGCTVVTLK (76 aa)).

Belongs to the DNA mismatch repair MutS family. MutS2 subfamily. In terms of assembly, homodimer. Binds to stalled ribosomes, contacting rRNA.

Endonuclease that is involved in the suppression of homologous recombination and thus may have a key role in the control of bacterial genetic diversity. Functionally, acts as a ribosome collision sensor, splitting the ribosome into its 2 subunits. Detects stalled/collided 70S ribosomes which it binds and splits by an ATP-hydrolysis driven conformational change. Acts upstream of the ribosome quality control system (RQC), a ribosome-associated complex that mediates the extraction of incompletely synthesized nascent chains from stalled ribosomes and their subsequent degradation. Probably generates substrates for RQC. The polypeptide is Endonuclease MutS2 (Fusobacterium nucleatum subsp. nucleatum (strain ATCC 25586 / DSM 15643 / BCRC 10681 / CIP 101130 / JCM 8532 / KCTC 2640 / LMG 13131 / VPI 4355)).